Reading from the N-terminus, the 106-residue chain is Small ribosomal subunit protein uS10 (106 aa).

It belongs to the universal ribosomal protein uS10 family. As to quaternary structure, part of the 30S ribosomal subunit.

Functionally, involved in the binding of tRNA to the ribosomes. This is Small ribosomal subunit protein uS10 from Prochlorococcus marinus (strain MIT 9211).